Reading from the N-terminus, the 669-residue chain is Cytokinesis protein 2 (669 aa).

An F-BAR domain is found at 1-261 (MSYSYEACFW…HLNSFTAADE (261 aa)). The stretch at 134–200 (KKGCEVLQKK…LKQEYKASQK (67 aa)) forms a coiled coil. 2 positions are modified to phosphoserine: Ser-337 and Ser-366. The segment at 372-518 (VQLQSNVDDS…DYNTRRDTST (147 aa)) is disordered. Composition is skewed to basic and acidic residues over residues 381–391 (SVLRQKPDKPR) and 397–413 (EQLKPDEDSKNPDEKGL). Phosphoserine is present on Ser-421. Composition is skewed to low complexity over residues 421–431 (SLSSPSESSSS) and 445–455 (MESMTTSVSSM). Positions 599–667 (PVIEYAKAMY…PYNFIQLLHQ (69 aa)) constitute an SH3 domain.

Interacts with INN1.

The protein resides in the cytoplasm. The protein localises to the cytoskeleton. It is found in the bud neck. Throughout most of the cell cycle it forms a double ring that coincides with the septins. After the onset of mitosis, forms a ring-like structure which colocalizes with the medial actin ring. Mediates cytoskeletal rearrangements required for cytokinesis. In conjunction with the medial actin ring exhibits contraction-like action. In Saccharomyces cerevisiae (strain ATCC 204508 / S288c) (Baker's yeast), this protein is Cytokinesis protein 2 (HOF1).